We begin with the raw amino-acid sequence, 936 residues long: Protocadherin alpha-5 (936 aa).

Positions 1 to 28 (MVYSRRGSLGSRLLLLWLLLAYWKAGSG) are cleaved as a signal peptide. Residues 29-696 (QLHYSIPEEA…GPEAALVDVN (668 aa)) are Extracellular-facing. 6 Cadherin domains span residues 33 to 132 (SIPE…PPRF), 156 to 241 (ASDL…APEF), 242 to 349 (DKSI…TPEM), 350 to 454 (AITT…LRAF), 455 to 564 (AQPQ…APAL), and 580 to 677 (VPRS…APKA). N-linked (GlcNAc...) asparagine glycans are attached at residues Asn264, Asn448, and Asn547. The chain crosses the membrane as a helical span at residues 697–717 (VYLIIAICAVSSLLVLTLLLY). Residues 718-936 (TALRCSAQPT…GNSTTDNSDQ (219 aa)) lie on the Cytoplasmic side of the membrane. 3 disordered regions span residues 759 to 793 (SGEA…PDWR), 815 to 875 (RAGP…DKFI), and 887 to 936 (QEPA…NSDQ). PXXP repeat units lie at residues 773–776 (PSLP), 785–788 (PRQP), 818–821 (PGGP), 873–876 (KFII), and 877–890 (PGSP…QEPA). A 5 X 4 AA repeats of P-X-X-P region spans residues 773-890 (PSLPQGPTST…AIISIRQEPA (118 aa)). Residues 774-786 (SLPQGPTSTDNPR) show a composition bias toward polar residues. The span at 895–909 (DKSDFITFGKKEETK) shows a compositional bias: basic and acidic residues.

The protein localises to the cell membrane. Potential calcium-dependent cell-adhesion protein. May be involved in the establishment and maintenance of specific neuronal connections in the brain. The polypeptide is Protocadherin alpha-5 (PCDHA5) (Pan troglodytes (Chimpanzee)).